The chain runs to 811 residues: Potassium transporter 27 (811 aa).

At 1-64 (MGDDVLGRGS…QEESWARTLK (64 aa)) the chain is on the cytoplasmic side. The helical transmembrane segment at 65–85 (LAFQCVGILYGDIGTSPLFVY) threads the bilayer. At 86–102 (SSTFKDGVRHPDDLLGA) the chain is on the extracellular side. The chain crosses the membrane as a helical span at residues 103–123 (LSLIIYSFALFTIVKYVFIAL). Residues 124–188 (RANDDGDGGT…ELLETNRAVK (65 aa)) are Cytoplasmic-facing. Residues 189–209 (IWLFLLTILATAMVISDAVLT) traverse the membrane as a helical segment. Residues 210-226 (PAISVLSAVGGLKEKAP) are Extracellular-facing. Residues 227–247 (NLTTDEIVWITVATLVVLFAI) traverse the membrane as a helical segment. Topologically, residues 248-254 (QRFGTDK) are cytoplasmic. The helical transmembrane segment at 255–275 (IGYLFAPIILLWLLLIGCVGI) threads the bilayer. The Extracellular segment spans residues 276–310 (YNTIKFDTGVLRAFNLKYIIDYFRRNKKDGWISLS). The chain crosses the membrane as a helical span at residues 311–331 (GILLCFTGTEALFSDLGYFSI). The Cytoplasmic portion of the chain corresponds to 332 to 335 (RSIQ). A helical membrane pass occupies residues 336 to 356 (LSFSFGLVPSVLLAYIGQAAY). Residues 357 to 375 (LREHPEHIANTFYRSTPNV) are Extracellular-facing. Residues 376 to 396 (MFWPTFILAVAASIIGSQAMI) traverse the membrane as a helical segment. Residues 397–434 (SCAFATISHLQTLNCFPRVKILHTSRQYSGQLYIPEVN) lie on the Cytoplasmic side of the membrane. The chain crosses the membrane as a helical span at residues 435–455 (FLLCVGACLVTIGFKTTVIIG). At 456–459 (EAHA) the chain is on the extracellular side. A helical membrane pass occupies residues 460 to 480 (ICVVFVMIITTLLLTIVMLLV). Over 481 to 482 (WK) the chain is Cytoplasmic. The chain crosses the membrane as a helical span at residues 483-503 (VSIWYVALFFIVFMSSESIYL). Residues 504 to 515 (SAVLYQFVHGEY) lie on the Extracellular side of the membrane. The helical transmembrane segment at 516 to 536 (VPVAMSVFLMIVMTVWHYVHV) threads the bilayer. Topologically, residues 537–811 (KRYEFELEHT…VLKVGIAYEI (275 aa)) are cytoplasmic.

It belongs to the HAK/KUP transporter (TC 2.A.72.3) family.

It is found in the membrane. Functionally, high-affinity potassium transporter. The chain is Potassium transporter 27 (HAK27) from Oryza sativa subsp. japonica (Rice).